The sequence spans 512 residues: Norfluorocurarine oxidase (512 aa).

Residues 3–23 form a helical membrane-spanning segment; the sequence is LLLNPSLFSLLPLLLFIIFLF. C453 contacts heme.

Belongs to the cytochrome P450 family. Requires heme as cofactor.

The protein localises to the membrane. It carries out the reaction norfluorocurarine + reduced [NADPH--hemoprotein reductase] + O2 = 18-hydroxynorfluorocurarine + oxidized [NADPH--hemoprotein reductase] + H2O + H(+). It participates in alkaloid biosynthesis. Monooxygenase involved in the biosynthesis of curare monoterpene indole alkaloids (MIAs), natural products such as diaboline, a pharmacologically active compound used to regulate blood pressure. Curare alkaloids act as animal glycine receptor antagonists. Catalyzes the conversion of norfluorocurarine to 18-OH norfluorocurarine. The chain is Norfluorocurarine oxidase from Strychnos sp.